We begin with the raw amino-acid sequence, 804 residues long: Elongation factor G, mitochondrial (804 aa).

The N-terminal 63 residues, 1-63 (MSMHRVARAV…RHFFQSPIIR (63 aa)), are a transit peptide targeting the mitochondrion. The 287-residue stretch at 99-385 (RRVRNIGIAA…AVCDYLPNPA (287 aa)) folds into the tr-type G domain. GTP-binding positions include 108 to 115 (AHIDSGKT), 183 to 187 (DTPGH), and 237 to 240 (NKMD).

The protein belongs to the TRAFAC class translation factor GTPase superfamily. Classic translation factor GTPase family. EF-G/EF-2 subfamily.

The protein localises to the mitochondrion. It participates in protein biosynthesis; polypeptide chain elongation. In terms of biological role, mitochondrial GTPase that catalyzes the GTP-dependent ribosomal translocation step during translation elongation. During this step, the ribosome changes from the pre-translocational (PRE) to the post-translocational (POST) state as the newly formed A-site-bound peptidyl-tRNA and P-site-bound deacylated tRNA move to the P and E sites, respectively. Catalyzes the coordinated movement of the two tRNA molecules, the mRNA and conformational changes in the ribosome. This Sclerotinia sclerotiorum (strain ATCC 18683 / 1980 / Ss-1) (White mold) protein is Elongation factor G, mitochondrial (mef1).